A 260-amino-acid chain; its full sequence is Glutathione S-transferase domain-containing protein DDB_G0280881 (260 aa).

The GST N-terminal domain occupies 7–96 (KVDFIFYTNG…YLAQKYNTFL (90 aa)). The GST C-terminal domain occupies 102–228 (NPKENSDVIT…QQISEGFKNF (127 aa)).

The protein belongs to the GST superfamily.

The chain is Glutathione S-transferase domain-containing protein DDB_G0280881 from Dictyostelium discoideum (Social amoeba).